The sequence spans 213 residues: Large ribosomal subunit protein uL3 (213 aa).

The disordered stretch occupies residues 130-161; sequence KRGNMTHGSKNHRLPGSTGAGTTPGRVYPGKR.

It belongs to the universal ribosomal protein uL3 family. As to quaternary structure, part of the 50S ribosomal subunit. Forms a cluster with proteins L14 and L19.

One of the primary rRNA binding proteins, it binds directly near the 3'-end of the 23S rRNA, where it nucleates assembly of the 50S subunit. This is Large ribosomal subunit protein uL3 from Picosynechococcus sp. (strain ATCC 27264 / PCC 7002 / PR-6) (Agmenellum quadruplicatum).